The chain runs to 310 residues: Pyrimidine-specific ribonucleoside hydrolase RihA (310 aa).

His-240 is a catalytic residue.

It belongs to the IUNH family. RihA subfamily.

In terms of biological role, hydrolyzes cytidine or uridine to ribose and cytosine or uracil, respectively. The sequence is that of Pyrimidine-specific ribonucleoside hydrolase RihA from Photobacterium profundum (strain SS9).